Reading from the N-terminus, the 560-residue chain is Portal protein (560 aa).

Residues 526 to 560 (KVQADETGNYSGSDVSPLKFKPETLPFSGSTDDSI) are disordered.

It belongs to the Tevenvirinae portal protein family. In terms of assembly, homododecamer. Interacts with the large terminase subunit. Interacts with the major capsid protein. Interacts with the capsid vertex protein.

Its subcellular location is the virion. Functionally, forms the portal vertex of the capsid. This portal plays critical roles in head assembly, genome packaging, neck/tail attachment, and genome ejection. The portal protein multimerizes as a single ring-shaped homododecamer arranged around a central channel. Binds to the terminase subunits to form the packaging machine. The protein is Portal protein of Salmonella typhi.